Reading from the N-terminus, the 300-residue chain is Type II restriction enzyme HindIII (300 aa).

The enzyme catalyses Endonucleolytic cleavage of DNA to give specific double-stranded fragments with terminal 5'-phosphates.. Functionally, a P subtype restriction enzyme that recognizes the double-stranded sequence 5'-AAGCTT-3' and cleaves after A-1. The protein is Type II restriction enzyme HindIII of Haemophilus influenzae (strain ATCC 51907 / DSM 11121 / KW20 / Rd).